We begin with the raw amino-acid sequence, 299 residues long: Protease HtpX homolog (299 aa).

Transmembrane regions (helical) follow at residues 14–34 (WLLLLVFFLLLGLVGYGVGYL) and 39–59 (GFGGMILALVIGFIYAVTMIF). Histidine 143 contributes to the Zn(2+) binding site. Glutamate 144 is an active-site residue. Position 147 (histidine 147) interacts with Zn(2+). 2 helical membrane passes run 153-173 (IRISTIAVALASAITMLAVMA) and 198-218 (IILLIISLIAIILAPLAATLV). Residue glutamate 227 participates in Zn(2+) binding.

It belongs to the peptidase M48B family. The cofactor is Zn(2+).

It localises to the cell membrane. The chain is Protease HtpX homolog from Streptococcus thermophilus (strain CNRZ 1066).